The primary structure comprises 1703 residues: Stress response protein NST1 (1703 aa).

Disordered regions lie at residues 1-91, 243-288, 347-484, 566-724, 759-807, 843-1292, 1353-1407, 1424-1465, 1516-1537, 1558-1581, 1595-1637, and 1672-1703; these read MAKS…AKDA, DQPL…PLPP, HALR…IWST, VSSG…GLGS, MHRE…EQRM, LREL…LGAP, FSPM…IGPI, HTGA…DIID, SSFS…NGGG, ASTP…PWAR, EQPG…HHQL, and GAPG…GSHE. Residues 7–36 are compositionally biased toward low complexity; the sequence is PRSTPAARAAAVPPPRLAAAAQQQHHQQQP. Pro residues predominate over residues 37–48; the sequence is PSTPPAPVPPTK. Residues 57-66 show a composition bias toward polar residues; that stretch reads PPRSASPVSN. The segment covering 77-86 has biased composition (basic residues); the sequence is AKKKKKKSKS. Positions 253 to 273 are enriched in polar residues; sequence NTANNAHPTNVNGAYGQYSSS. A compositionally biased stretch (pro residues) spans 274-288; sequence PNPPPTQPPVEPLPP. The span at 365-376 shows a compositional bias: basic residues; it reads SKNKKKKKKKKG. Positions 384–393 are enriched in basic and acidic residues; that stretch reads HGDDEAHEIE. Over residues 396 to 409 the composition is skewed to pro residues; that stretch reads VPPPKPVPNHPPPS. Composition is skewed to low complexity over residues 410–419 and 453–464; these read TNVSSVARNS and SSNSGKRSVSSS. Residues 572 to 581 are compositionally biased toward pro residues; the sequence is IPPPPGPGPF. Positions 614 to 650 are enriched in basic residues; it reads THTHTHAHTHTHTHTHTHTHTHAHQHPHPHPHGRKAS. A compositionally biased stretch (acidic residues) spans 657-690; it reads DGYDDDELDDDAEYDDDDDDADYDDEDEDDDVEL. Over residues 691-703 the composition is skewed to basic and acidic residues; that stretch reads EKERAREDYDKRN. A coiled-coil region spans residues 748–1031; sequence LEMMEQLAER…AKQAAAAASR (284 aa). Positions 771–802 are enriched in acidic residues; that stretch reads ASDDEDDVDGPDDVDDEDLDEEDEDEEDEILT. Composition is skewed to basic and acidic residues over residues 853–866, 874–896, and 904–1023; these read EKAR…ESQK, QREA…EAEV, and RDAE…REAK. Composition is skewed to low complexity over residues 1024 to 1037 and 1111 to 1135; these read QAAA…SAAQ and AGGL…AVGS. The segment covering 1138–1148 has biased composition (pro residues); it reads PAPPQGLPPRP. A compositionally biased stretch (low complexity) spans 1158-1167; the sequence is SSSQTSSVSV. The segment covering 1200–1219 has biased composition (polar residues); it reads LNAQSNVPMPSAKTPGSSIS. Residues 1269-1291 show a composition bias toward low complexity; that stretch reads QNSGMFGSNGSMSSSLQSPSLGA. Low complexity predominate over residues 1431–1444; the sequence is GRSSSTTSGSGATS. Gly residues predominate over residues 1598 to 1619; sequence GGNGVGAGSNGGTPSGLGGIGG.

The protein belongs to the NST1 family.

The protein resides in the cytoplasm. In terms of biological role, may act as a negative regulator of salt tolerance. The chain is Stress response protein NST1 (NST1) from Mycosarcoma maydis (Corn smut fungus).